A 317-amino-acid polypeptide reads, in one-letter code: Ferrochelatase (317 aa).

Residues His192 and Glu271 each contribute to the Fe cation site.

This sequence belongs to the ferrochelatase family.

Its subcellular location is the cytoplasm. The enzyme catalyses heme b + 2 H(+) = protoporphyrin IX + Fe(2+). It functions in the pathway porphyrin-containing compound metabolism; protoheme biosynthesis; protoheme from protoporphyrin-IX: step 1/1. In terms of biological role, catalyzes the ferrous insertion into protoporphyrin IX. This chain is Ferrochelatase, found in Citrifermentans bemidjiense (strain ATCC BAA-1014 / DSM 16622 / JCM 12645 / Bem) (Geobacter bemidjiensis).